Reading from the N-terminus, the 231-residue chain is Red fluorescent protein eqFP611 (231 aa).

The segment at residues 63 to 65 (MYG) is a cross-link (2-iminomethyl-5-imidazolinone (Met-Gly)). Tyrosine 64 is modified ((E)-2,3-didehydrotyrosine).

This sequence belongs to the GFP family. In terms of assembly, monomer. Post-translationally, contains a chromophore consisting of modified amino acid residues. The chromophore is formed by autocatalytic backbone condensation between Xaa-N and Gly-(N+2), oxidation of Tyr-(N+1) to didehydrotyrosine, and formation of a double bond to the alpha-amino nitrogen of residue Xaa-N. Maturation of the chromophore requires nothing other than molecular oxygen.

Its function is as follows. Pigment protein. The chain is Red fluorescent protein eqFP611 from Entacmaea quadricolor (Bubble-tip anemone).